Reading from the N-terminus, the 332-residue chain is GTP cyclohydrolase-2 (332 aa).

2 disordered regions span residues 1-20 (MASK…SETH) and 25-46 (PLLS…IPPE). Over residues 29-41 (PTLTPSHIPSQTP) the composition is skewed to polar residues. A GTP-binding site is contributed by 171–175 (RIHSE). Zn(2+) contacts are provided by C176, C187, and C189. GTP is bound by residues Q192, 214 to 216 (EGR), and T236. The active-site Proton acceptor is the D248. The active-site Nucleophile is R250. GTP contacts are provided by T271 and K276.

It belongs to the GTP cyclohydrolase II family. Zn(2+) serves as cofactor.

It catalyses the reaction GTP + 4 H2O = 2,5-diamino-6-hydroxy-4-(5-phosphoribosylamino)-pyrimidine + formate + 2 phosphate + 3 H(+). It participates in cofactor biosynthesis; riboflavin biosynthesis; 5-amino-6-(D-ribitylamino)uracil from GTP: step 1/4. Its function is as follows. Catalyzes the conversion of GTP to 2,5-diamino-6-ribosylamino-4(3H)-pyrimidinone 5'-phosphate (DARP), formate and pyrophosphate. This Meyerozyma guilliermondii (strain ATCC 6260 / CBS 566 / DSM 6381 / JCM 1539 / NBRC 10279 / NRRL Y-324) (Yeast) protein is GTP cyclohydrolase-2 (RIB1).